The chain runs to 416 residues: Meiotically up-regulated protein PB1A10.08 (416 aa).

It localises to the cytoplasm. Its function is as follows. May have a role in meiosis and sporulation. The sequence is that of Meiotically up-regulated protein PB1A10.08 from Schizosaccharomyces pombe (strain 972 / ATCC 24843) (Fission yeast).